Here is a 473-residue protein sequence, read N- to C-terminus: 6-phosphogluconate dehydrogenase, decarboxylating (473 aa).

NADP(+) contacts are provided by residues 10-15 (GMAVMG), 33-35 (NRT), 74-76 (VKS), and Asn102. Substrate contacts are provided by residues Asn102 and 128–130 (SGG). The active-site Proton acceptor is Lys182. Residue 185–186 (HN) participates in substrate binding. Glu189 serves as the catalytic Proton donor. 5 residues coordinate substrate: Tyr190, Lys260, Arg287, Arg446, and His452.

Belongs to the 6-phosphogluconate dehydrogenase family. As to quaternary structure, homodimer.

It carries out the reaction 6-phospho-D-gluconate + NADP(+) = D-ribulose 5-phosphate + CO2 + NADPH. It participates in carbohydrate degradation; pentose phosphate pathway; D-ribulose 5-phosphate from D-glucose 6-phosphate (oxidative stage): step 3/3. In terms of biological role, catalyzes the oxidative decarboxylation of 6-phosphogluconate to ribulose 5-phosphate and CO(2), with concomitant reduction of NADP to NADPH. The polypeptide is 6-phosphogluconate dehydrogenase, decarboxylating (gnd) (Buchnera aphidicola subsp. Schizaphis graminum (strain Sg)).